A 1149-amino-acid chain; its full sequence is Structural maintenance of chromosomes protein 6 homolog smc-6 (1149 aa).

An ATP-binding site is contributed by 77 to 84; the sequence is GPNGSGKS. Residues 309 to 460 are a coiled coil; the sequence is LQDETKKEYA…EEEKYTIQRD (152 aa). The interval 461-687 is flexible hinge; sequence INQLRRKIEQ…DVDEGALARL (227 aa). A coiled-coil region spans residues 714 to 920; that stretch reads YNERDQTKAA…AVDRATVGCD (207 aa). Disordered stretches follow at residues 875–900 and 1026–1060; these read NDKKNHPMPPGETDPPDLSSFPSTTE and EVDEHSYDDDSDDSTGPRRKKSKKSGQKKKRVRDL. Over residues 1026 to 1038 the composition is skewed to acidic residues; it reads EVDEHSYDDDSDD. Positions 1042–1058 are enriched in basic residues; sequence PRRKKSKKSGQKKKRVR.

The protein belongs to the SMC family. SMC6 subfamily. In terms of assembly, interacts with smc-5. Expressed in the germline (at protein level).

It localises to the nucleus. It is found in the chromosome. Core component of the smc-5/smc-6 complex. Involved in DNA double-strand break repair by promoting sister-chromatid homologous recombination during meiosis. Also plays a role in the DNA damage repair of ultraviolet (UV) radiation-induced DNA lesions. Promotes efficient DNA replication. The polypeptide is Structural maintenance of chromosomes protein 6 homolog smc-6 (Caenorhabditis elegans).